A 120-amino-acid chain; its full sequence is Fumarate reductase subunit D (120 aa).

Transmembrane regions (helical) follow at residues 25-45 (FAML…LGVI), 55-75 (VAGF…ISMP), and 100-120 (IACY…IFMI).

The protein belongs to the FrdD family. In terms of assembly, part of an enzyme complex containing four subunits: a flavoprotein (FrdA), an iron-sulfur protein (FrdB), and two hydrophobic anchor proteins (FrdC and FrdD).

It is found in the cell inner membrane. Its function is as follows. Anchors the catalytic components of the fumarate reductase complex to the cell membrane, binds quinones. The polypeptide is Fumarate reductase subunit D (Aliivibrio salmonicida (strain LFI1238) (Vibrio salmonicida (strain LFI1238))).